A 315-amino-acid chain; its full sequence is Methionyl-tRNA formyltransferase (315 aa).

Residue 113 to 116 (SLLP) coordinates (6S)-5,6,7,8-tetrahydrofolate.

The protein belongs to the Fmt family.

It catalyses the reaction L-methionyl-tRNA(fMet) + (6R)-10-formyltetrahydrofolate = N-formyl-L-methionyl-tRNA(fMet) + (6S)-5,6,7,8-tetrahydrofolate + H(+). Its function is as follows. Attaches a formyl group to the free amino group of methionyl-tRNA(fMet). The formyl group appears to play a dual role in the initiator identity of N-formylmethionyl-tRNA by promoting its recognition by IF2 and preventing the misappropriation of this tRNA by the elongation apparatus. The sequence is that of Methionyl-tRNA formyltransferase from Klebsiella pneumoniae (strain 342).